The chain runs to 249 residues: Aquaporin TIP4-1 (249 aa).

An N-acetylmethionine modification is found at methionine 1. At 1-20 (MKKIELGHHSEAAKPDCIKA) the chain is on the cytoplasmic side. N6,N6-dimethyllysine is present on lysine 3. Residues 21–41 (LIVEFITTFLFVFAGVGSAMA) traverse the membrane as a helical segment. The Vacuolar portion of the chain corresponds to 42–49 (TDSLVGNT). Residues 50–70 (LVGLFAVAVAHAFVVAVMISA) form a helical membrane-spanning segment. The Cytoplasmic portion of the chain corresponds to 71 to 105 (GHISGGHLNPAVTLGLLLGGHISVFRAFLYWIDQL). Positions 79 to 81 (NPA) match the NPA 1 motif. The helical transmembrane segment at 106–126 (LASSAACFLLSYLTGGMGTPV) threads the bilayer. Residues 127 to 137 (HTLASGVSYTQ) lie on the Vacuolar side of the membrane. Residues 138-158 (GIIWEIILTFSLLFTVYATIV) traverse the membrane as a helical segment. The Cytoplasmic portion of the chain corresponds to 159–166 (DPKKGSLD). The chain crosses the membrane as a helical span at residues 167–187 (GFGPLLTGFVVGANILAGGAF). Over 188-212 (SGASMNPARSFGPALVSGNWTDHWV) the chain is Vacuolar. An NPA 2 motif is present at residues 193–195 (NPA). A helical membrane pass occupies residues 213–233 (YWVGPLIGGGLAGFIYENVLI). Residues 234 to 249 (DRPHVPVADDEQPLLN) are Cytoplasmic-facing.

The protein belongs to the MIP/aquaporin (TC 1.A.8) family. TIP (TC 1.A.8.10) subfamily. As to expression, expressed in roots.

It is found in the vacuole membrane. Aquaporins facilitate the transport of water and small neutral solutes across cell membranes. Transports urea in yeast cells in a pH-independent manner. The protein is Aquaporin TIP4-1 (TIP4-1) of Arabidopsis thaliana (Mouse-ear cress).